Here is a 265-residue protein sequence, read N- to C-terminus: HTH-type transcriptional activator CfaD (265 aa).

One can recognise an HTH araC/xylS-type domain in the interval 164-261 (DKVRNVIEKD…GVTPKQFFTY (98 aa)). 2 consecutive DNA-binding regions (H-T-H motif) follow at residues 181-202 (GIIADAFNVSEITIRKRLESEN) and 228-251 (ISQISNMIGISSASYFIRVFNKHY).

As to quaternary structure, homodimer.

In terms of biological role, transcriptional activator of the CFA/I adhesin (cfaA and cfaB) genes of enterotoxigenic E.coli at 37 degrees Celsius. Also represses the silencing effect of H-NS (hns). In Escherichia coli, this protein is HTH-type transcriptional activator CfaD.